The following is a 414-amino-acid chain: Glucose-1-phosphate adenylyltransferase (414 aa).

Alpha-D-glucose 1-phosphate-binding positions include Gly-164, 181–182 (EK), and Ser-199.

It belongs to the bacterial/plant glucose-1-phosphate adenylyltransferase family. In terms of assembly, homotetramer.

The enzyme catalyses alpha-D-glucose 1-phosphate + ATP + H(+) = ADP-alpha-D-glucose + diphosphate. It functions in the pathway glycan biosynthesis; glycogen biosynthesis. Its function is as follows. Involved in the biosynthesis of ADP-glucose, a building block required for the elongation reactions to produce glycogen. Catalyzes the reaction between ATP and alpha-D-glucose 1-phosphate (G1P) to produce pyrophosphate and ADP-Glc. The protein is Glucose-1-phosphate adenylyltransferase of Kocuria rhizophila (strain ATCC 9341 / DSM 348 / NBRC 103217 / DC2201).